Reading from the N-terminus, the 360-residue chain is Phosphoserine aminotransferase (360 aa).

Arg42 contributes to the L-glutamate binding site. Pyridoxal 5'-phosphate-binding positions include 76–77, Trp102, Thr153, Asp172, and Gln195; that span reads AR. The residue at position 196 (Lys196) is an N6-(pyridoxal phosphate)lysine. 237-238 is a pyridoxal 5'-phosphate binding site; the sequence is NT.

This sequence belongs to the class-V pyridoxal-phosphate-dependent aminotransferase family. SerC subfamily. Homodimer. It depends on pyridoxal 5'-phosphate as a cofactor.

The protein resides in the cytoplasm. The enzyme catalyses O-phospho-L-serine + 2-oxoglutarate = 3-phosphooxypyruvate + L-glutamate. It catalyses the reaction 4-(phosphooxy)-L-threonine + 2-oxoglutarate = (R)-3-hydroxy-2-oxo-4-phosphooxybutanoate + L-glutamate. It functions in the pathway amino-acid biosynthesis; L-serine biosynthesis; L-serine from 3-phospho-D-glycerate: step 2/3. It participates in cofactor biosynthesis; pyridoxine 5'-phosphate biosynthesis; pyridoxine 5'-phosphate from D-erythrose 4-phosphate: step 3/5. In terms of biological role, catalyzes the reversible conversion of 3-phosphohydroxypyruvate to phosphoserine and of 3-hydroxy-2-oxo-4-phosphonooxybutanoate to phosphohydroxythreonine. This is Phosphoserine aminotransferase from Aliivibrio fischeri (strain ATCC 700601 / ES114) (Vibrio fischeri).